The primary structure comprises 462 residues: Kinetochore protein Nuf2-B (462 aa).

The stretch at 143–462 forms a coiled coil; sequence SGYKSALENV…AELNRRLSRQ (320 aa). Positions 236 to 259 are disordered; it reads EQERMKSQIVESPEQRKSKTERMK. Basic and acidic residues predominate over residues 248–259; sequence PEQRKSKTERMK.

Belongs to the NUF2 family. Component of the NDC80 complex, which is composed of ndc80, cdca1, spbc24 and spbc25. The NDC80 complex interacts with mis12 and zwint.

The protein resides in the nucleus. It is found in the chromosome. The protein localises to the centromere. Its subcellular location is the kinetochore. Its function is as follows. Acts as a component of the essential kinetochore-associated NDC80 complex, which is required for chromosome segregation and spindle checkpoint activity. Required for kinetochore integrity and the organization of stable microtubule binding sites in the outer plate of the kinetochore. The NDC80 complex synergistically enhances the affinity of the SKA1 complex for microtubules and may allow the NDC80 complex to track depolymerizing microtubules. This chain is Kinetochore protein Nuf2-B (nuf2-b), found in Xenopus laevis (African clawed frog).